Here is a 721-residue protein sequence, read N- to C-terminus: Protein quick-to-court (721 aa).

Disordered stretches follow at residues 1 to 42 (MMTS…RIPH), 143 to 210 (VGNS…ASVA), 360 to 379 (SSPEERSASSDAVTVREAEL), 393 to 428 (DEGNAKGSPRHLSRQQQQQANHSLQAMQMSAEMQSS), and 441 to 471 (SSVHSKDSQTQSEACGTATPDGEADVGCGAG). Positions 17-31 (QVQREKDNDSAEDSH) are enriched in basic and acidic residues. Positions 161–201 (NGGSDISSSGTSSSSSNNKESSPRTTRTPRTPQTPQTPQTP) are enriched in low complexity. Residues 362-379 (PEERSASSDAVTVREAEL) show a composition bias toward basic and acidic residues. Residues 406–420 (RQQQQQANHSLQAMQ) are compositionally biased toward low complexity. Over residues 441–454 (SSVHSKDSQTQSEA) the composition is skewed to polar residues. The stretch at 511–569 (KRSHNDKVEALLQKLAECNTRYSDMVPDYEQAKQRIRELEKQLEDLQRKLIEHEEKQNK) forms a coiled coil. Positions 668 to 716 (HVDPEVTLQFLKSAIFYFLTDKENSQGHLQAIESILEFTDAEKQKISAA) constitute a GRIP domain.

Expressed in the third antennal segment and the maxillary palp, with increased expression near the cuticle of both olfactory organs. Also detected in the second antenna segment. In the brain, expressed in the central nervous system, with high levels of expression in the visual system including the retina and optic lobe, and uniform expression in the cortex. Detected in the thorax and abdomen, with increased expression in the ventral ganglion. In males, detected in the reproductive tract including the ejaculatory bulb and testis.

Functionally, in adult males, modulates sexual behavior by playing a role in sex discrimination and maintaining normal levels of sexual activity towards both males and females. In Drosophila melanogaster (Fruit fly), this protein is Protein quick-to-court.